Reading from the N-terminus, the 544-residue chain is Membrane protein insertase YidC (544 aa).

Residues Lys-4–Tyr-24 traverse the membrane as a helical segment. The interval Asn-44–Glu-78 is disordered. 3 consecutive transmembrane segments (helical) span residues Asn-363 to Gly-383, Leu-434 to Ile-454, and Pro-508 to Phe-528.

It belongs to the OXA1/ALB3/YidC family. Type 1 subfamily. As to quaternary structure, interacts with the Sec translocase complex via SecD. Specifically interacts with transmembrane segments of nascent integral membrane proteins during membrane integration.

The protein resides in the cell inner membrane. Functionally, required for the insertion and/or proper folding and/or complex formation of integral membrane proteins into the membrane. Involved in integration of membrane proteins that insert both dependently and independently of the Sec translocase complex, as well as at least some lipoproteins. Aids folding of multispanning membrane proteins. This is Membrane protein insertase YidC from Syntrophus aciditrophicus (strain SB).